Here is a 283-residue protein sequence, read N- to C-terminus: 4-hydroxy-3-methylbut-2-enyl diphosphate reductase (283 aa).

C12 serves as a coordination point for [4Fe-4S] cluster. Positions 41 and 74 each coordinate (2E)-4-hydroxy-3-methylbut-2-enyl diphosphate. Residues H41 and H74 each coordinate dimethylallyl diphosphate. 2 residues coordinate isopentenyl diphosphate: H41 and H74. C96 provides a ligand contact to [4Fe-4S] cluster. H124 lines the (2E)-4-hydroxy-3-methylbut-2-enyl diphosphate pocket. H124 is a binding site for dimethylallyl diphosphate. Residue H124 coordinates isopentenyl diphosphate. E126 functions as the Proton donor in the catalytic mechanism. Position 161 (T161) interacts with (2E)-4-hydroxy-3-methylbut-2-enyl diphosphate. Position 189 (C189) interacts with [4Fe-4S] cluster. (2E)-4-hydroxy-3-methylbut-2-enyl diphosphate is bound by residues S217, N219, and S261. Residues S217, N219, and S261 each contribute to the dimethylallyl diphosphate site. 3 residues coordinate isopentenyl diphosphate: S217, N219, and S261.

Belongs to the IspH family. [4Fe-4S] cluster is required as a cofactor.

The catalysed reaction is isopentenyl diphosphate + 2 oxidized [2Fe-2S]-[ferredoxin] + H2O = (2E)-4-hydroxy-3-methylbut-2-enyl diphosphate + 2 reduced [2Fe-2S]-[ferredoxin] + 2 H(+). It catalyses the reaction dimethylallyl diphosphate + 2 oxidized [2Fe-2S]-[ferredoxin] + H2O = (2E)-4-hydroxy-3-methylbut-2-enyl diphosphate + 2 reduced [2Fe-2S]-[ferredoxin] + 2 H(+). It functions in the pathway isoprenoid biosynthesis; dimethylallyl diphosphate biosynthesis; dimethylallyl diphosphate from (2E)-4-hydroxy-3-methylbutenyl diphosphate: step 1/1. The protein operates within isoprenoid biosynthesis; isopentenyl diphosphate biosynthesis via DXP pathway; isopentenyl diphosphate from 1-deoxy-D-xylulose 5-phosphate: step 6/6. Catalyzes the conversion of 1-hydroxy-2-methyl-2-(E)-butenyl 4-diphosphate (HMBPP) into a mixture of isopentenyl diphosphate (IPP) and dimethylallyl diphosphate (DMAPP). Acts in the terminal step of the DOXP/MEP pathway for isoprenoid precursor biosynthesis. The chain is 4-hydroxy-3-methylbut-2-enyl diphosphate reductase from Anaeromyxobacter sp. (strain Fw109-5).